A 490-amino-acid chain; its full sequence is Betaine aldehyde dehydrogenase (490 aa).

Residues isoleucine 27 and aspartate 93 each coordinate K(+). 150–152 (GAW) provides a ligand contact to NAD(+). Catalysis depends on lysine 162, which acts as the Charge relay system. Position 176–179 (176–179 (KPSE)) interacts with NAD(+). A K(+)-binding site is contributed by valine 180. 230-233 (GTDT) is an NAD(+) binding site. Leucine 246 contributes to the K(+) binding site. Glutamate 252 acts as the Proton acceptor in catalysis. Residues glycine 254, cysteine 286, and glutamate 387 each coordinate NAD(+). The active-site Nucleophile is cysteine 286. Cysteine sulfenic acid (-SOH) is present on cysteine 286. Positions 457 and 460 each coordinate K(+). Glutamate 464 acts as the Charge relay system in catalysis.

It belongs to the aldehyde dehydrogenase family. As to quaternary structure, dimer of dimers. K(+) serves as cofactor.

It catalyses the reaction betaine aldehyde + NAD(+) + H2O = glycine betaine + NADH + 2 H(+). The protein operates within amine and polyamine biosynthesis; betaine biosynthesis via choline pathway; betaine from betaine aldehyde: step 1/1. In terms of biological role, involved in the biosynthesis of the osmoprotectant glycine betaine. Catalyzes the irreversible oxidation of betaine aldehyde to the corresponding acid. The chain is Betaine aldehyde dehydrogenase from Pseudomonas savastanoi pv. phaseolicola (strain 1448A / Race 6) (Pseudomonas syringae pv. phaseolicola (strain 1448A / Race 6)).